The sequence spans 790 residues: Cadherin-20 (790 aa).

The N-terminal stretch at 1 to 25 (MSCKRSYHRHCALVYYMVLLDLTNA) is a signal peptide. A propeptide spanning residues 26–52 (VFEFSHPLIRDSGNSQSRQLLHHRLKR) is cleaved from the precursor. Over 26-612 (VFEFSHPLIR…PYTLPISLSR (587 aa)) the chain is Extracellular. Cadherin domains lie at 54–158 (WVWN…EPKF), 159–267 (LDGP…PPRF), 268–382 (PQKH…PPVF), 383–487 (GSSF…APTF), and 487–605 (FTKF…EPYT). N-linked (GlcNAc...) asparagine glycosylation is found at asparagine 254, asparagine 283, asparagine 413, asparagine 454, and asparagine 535. The chain crosses the membrane as a helical span at residues 613–633 (GALIAILTCIFVLLVLVLLIL). The Cytoplasmic segment spans residues 634 to 790 (SMRRHRKQPY…YGTKDNNGSL (157 aa)).

As to expression, detected in embryonic posterior neural plate, embryonic neural tube, sulcus limitans and embryonic kidney.

The protein resides in the cell membrane. Its function is as follows. Cadherins are calcium-dependent cell adhesion proteins. They preferentially interact with themselves in a homophilic manner in connecting cells; cadherins may thus contribute to the sorting of heterogeneous cell types. This is Cadherin-20 (cdh20) from Xenopus laevis (African clawed frog).